The primary structure comprises 66 residues: MKAKFKVLIPEPKSKFIRIKCPNCGNEQTVFSHATFPVRCLSCGTQLVYPRGGKAKIVGETVRILG.

Cysteine 21, cysteine 24, cysteine 40, and cysteine 43 together coordinate Zn(2+). A C4-type zinc finger spans residues 21–43 (CPNCGNEQTVFSHATFPVRCLSC).

The protein belongs to the eukaryotic ribosomal protein eS27 family. In terms of assembly, part of the 30S ribosomal subunit. Zn(2+) serves as cofactor.

This is Small ribosomal subunit protein eS27 from Sulfurisphaera tokodaii (strain DSM 16993 / JCM 10545 / NBRC 100140 / 7) (Sulfolobus tokodaii).